Reading from the N-terminus, the 484-residue chain is Sushi domain-containing protein 4 (484 aa).

Residues M1–V35 form the signal peptide. 4 Sushi domains span residues Q46–S110, E111–C168, Q169–D230, and E232–K295. Disulfide bonds link C48–C90, C76–C108, C113–C156, C138–C168, C171–C215, C201–C228, C234–C280, and C265–C293. N-linked (GlcNAc...) asparagine glycans are attached at residues N95 and N125. N183 carries N-linked (GlcNAc...) asparagine glycosylation. Residues W311–A331 traverse the membrane as a helical segment. Positions S374–C484 are disordered. Polar residues-rich tracts occupy residues D424 to H442 and S449 to S467. A compositionally biased stretch (acidic residues) spans I470–C484.

Its subcellular location is the membrane. The chain is Sushi domain-containing protein 4 (susd4) from Danio rerio (Zebrafish).